Reading from the N-terminus, the 62-residue chain is Conotoxin Lt5.5 (62 aa).

The N-terminal stretch at 1–22 is a signal peptide; it reads MRCLQVFIIFLLLIPSPPSVDA. Positions 23 to 48 are excised as a propeptide; it reads QRKTKDDVPLASFHDNAKRTLKRLWN.

The protein belongs to the conotoxin T superfamily. Post-translationally, contains 2 disulfide bonds that can be either 'C1-C3, C2-C4' or 'C1-C4, C2-C3', since these disulfide connectivities have been observed for conotoxins with cysteine framework V (for examples, see AC P0DQQ7 and AC P81755). Expressed by the venom duct.

Its subcellular location is the secreted. This is Conotoxin Lt5.5 from Conus litteratus (Lettered cone).